We begin with the raw amino-acid sequence, 1068 residues long: Target of Nesh-SH3 (1068 aa).

The N-terminal stretch at 1–21 (MLSSLGCLLLCGSITLALGNA) is a signal peptide. N-linked (GlcNAc...) asparagine glycosylation is present at Asn-37. Residues 116–214 (KPLQLVVGTL…KIFNHKTVVG (99 aa)) form the Fibronectin type-III 1 domain. 2 disordered regions span residues 315-351 (SKTPEVEKISARPTTVTPETVPRSTKPTTSSALDVSE) and 384-811 (VFSS…SITD). The segment covering 326–339 (RPTTVTPETVPRST) has biased composition (low complexity). Over residues 340–351 (KPTTSSALDVSE) the composition is skewed to polar residues. Residues 447 to 462 (QPTTPAPQQTTSIPST) show a composition bias toward low complexity. Over residues 463–473 (PKRRPRPKPPR) the composition is skewed to basic residues. The span at 482 to 499 (AGTITPKISKSPEPTWTT) shows a compositional bias: polar residues. Pro residues predominate over residues 532-544 (RAPPKPKTSPRPR). Residues 562-574 (PKTSPSPEVSYTT) show a composition bias toward polar residues. Composition is skewed to low complexity over residues 603-631 (IPFIPMISPSPSQEELQTTLEETDQSTQE) and 737-750 (PPLRSTPRPTGTPL). Residues 802 to 811 (PDNSPCSITD) are compositionally biased toward polar residues. Residues 833 to 926 (PPTNLTVVTV…NTVAFSTESA (94 aa)) form the Fibronectin type-III 2 domain.

Probably interacts with ABI3. As to expression, expressed in brain, heart, lung, liver, pancreas kidney and placenta.

It is found in the secreted. The sequence is that of Target of Nesh-SH3 from Homo sapiens (Human).